A 472-amino-acid polypeptide reads, in one-letter code: Threonine synthase-like 2 (472 aa).

The residue at position 113 (K113) is an N6-(pyridoxal phosphate)lysine.

Belongs to the threonine synthase family. Requires pyridoxal 5'-phosphate as cofactor.

Its function is as follows. Acts as a catabolic phospho-lyase on both gamma- and beta-phosphorylated substrates. Degrades O-phospho-threonine (PThr) to alpha-ketobutyrate, ammonia and phosphate. The polypeptide is Threonine synthase-like 2 (thnsl2) (Xenopus laevis (African clawed frog)).